We begin with the raw amino-acid sequence, 429 residues long: D-inositol 3-phosphate glycosyltransferase (429 aa).

Position 20 (histidine 20) interacts with 1D-myo-inositol 3-phosphate. UDP-N-acetyl-alpha-D-glucosamine-binding positions include 26-27 and glycine 34; that span reads QP. Residues 31 to 36, lysine 89, tyrosine 122, threonine 146, and arginine 166 contribute to the 1D-myo-inositol 3-phosphate site; that span reads DAGGMN. UDP-N-acetyl-alpha-D-glucosamine is bound by residues arginine 240, lysine 245, and glutamine 306. 3 residues coordinate Mg(2+): tyrosine 315, arginine 316, and alanine 318. The UDP-N-acetyl-alpha-D-glucosamine site is built by glutamate 328 and glutamate 336. Threonine 342 contributes to the Mg(2+) binding site.

The protein belongs to the glycosyltransferase group 1 family. MshA subfamily. Homodimer.

It catalyses the reaction 1D-myo-inositol 3-phosphate + UDP-N-acetyl-alpha-D-glucosamine = 1D-myo-inositol 2-acetamido-2-deoxy-alpha-D-glucopyranoside 3-phosphate + UDP + H(+). Functionally, catalyzes the transfer of a N-acetyl-glucosamine moiety to 1D-myo-inositol 3-phosphate to produce 1D-myo-inositol 2-acetamido-2-deoxy-glucopyranoside 3-phosphate in the mycothiol biosynthesis pathway. The sequence is that of D-inositol 3-phosphate glycosyltransferase from Nocardiopsis dassonvillei (strain ATCC 23218 / DSM 43111 / CIP 107115 / JCM 7437 / KCTC 9190 / NBRC 14626 / NCTC 10488 / NRRL B-5397 / IMRU 509) (Actinomadura dassonvillei).